Consider the following 429-residue polypeptide: [LysW]-aminoadipate semialdehyde transaminase (429 aa).

Pyridoxal 5'-phosphate-binding positions include 112–113 (GT) and Phe-139. Residue Arg-142 coordinates substrate. 226 to 229 (DEIQ) is a binding site for pyridoxal 5'-phosphate. Lys-255 carries the N6-(pyridoxal phosphate)lysine modification. Substrate is bound at residue Thr-283. Thr-284 contributes to the pyridoxal 5'-phosphate binding site. Residues 408–429 (LRAQQSEMGQQQVSQGESVQTE) form a disordered region. Over residues 411–429 (QQSEMGQQQVSQGESVQTE) the composition is skewed to low complexity.

Belongs to the class-III pyridoxal-phosphate-dependent aminotransferase family. LysJ subfamily. In terms of assembly, homodimer. Pyridoxal 5'-phosphate is required as a cofactor.

Its subcellular location is the cytoplasm. It catalyses the reaction [amino-group carrier protein]-C-terminal-gamma-(L-lysyl)-L-glutamate + 2-oxoglutarate = [amino-group carrier protein]-C-terminal-N-(1-carboxy-5-oxopentan-1-yl)-L-glutamine + L-glutamate. It functions in the pathway amino-acid biosynthesis; L-lysine biosynthesis via AAA pathway; L-lysine from L-alpha-aminoadipate (Thermus route): step 4/5. Catalyzes the transfer of the amino group of L-glutamate to [LysW]-aminoadipate 6-semialdehyde, generating [LysW]-gamma-L-lysine. This chain is [LysW]-aminoadipate semialdehyde transaminase, found in Deinococcus radiodurans (strain ATCC 13939 / DSM 20539 / JCM 16871 / CCUG 27074 / LMG 4051 / NBRC 15346 / NCIMB 9279 / VKM B-1422 / R1).